Reading from the N-terminus, the 169-residue chain is uncharacterized protein (169 aa).

Ser165 carries the phosphoserine modification.

This is an uncharacterized protein from Drosophila melanogaster (Fruit fly).